Consider the following 356-residue polypeptide: MSLQAIVYEDNKLSVLDQLLLPHEHKYIPIKSVEDAYSVIKNMQVRGAPAIAIVAALAVAVSLVNVKTDDLRNYVIESFERLKQSRPTAVNLFQIAYKMRKLAEAYEGEEIRVVVVKEAEDLLARDLRDNHTIGELGSEYVLKLVNKPRLTILTHCNTGSLATSGYGTALGIIRSLNEKGAIERVYCTETRPNNQGSRLTAYELLYDNIASTLITDSTAASIMPKIDAVIVGCDRVARNGDTANKIGTLSLAILAKHFNVPFIVAGPSFSIDMTLPDGEQTKIEERPSRELVMVRGPVVRDFTTHQFGARESVHIAPINVKAYCPVFDVTPADLISAVVTEKAVFTKGPNGYEFKW.

D234 (proton donor) is an active-site residue.

This sequence belongs to the eIF-2B alpha/beta/delta subunits family. MtnA subfamily.

The protein resides in the cytoplasm. Its subcellular location is the nucleus. It catalyses the reaction 5-(methylsulfanyl)-alpha-D-ribose 1-phosphate = 5-(methylsulfanyl)-D-ribulose 1-phosphate. Its pathway is amino-acid biosynthesis; L-methionine biosynthesis via salvage pathway; L-methionine from S-methyl-5-thio-alpha-D-ribose 1-phosphate: step 1/6. Its function is as follows. Catalyzes the interconversion of methylthioribose-1-phosphate (MTR-1-P) into methylthioribulose-1-phosphate (MTRu-1-P). The chain is Methylthioribose-1-phosphate isomerase (mri1) from Schizosaccharomyces japonicus (strain yFS275 / FY16936) (Fission yeast).